The following is an 868-amino-acid chain: Translation initiation factor IF-2 (868 aa).

Over residues 199 to 209 (SKKEEVKPEKV) the composition is skewed to basic and acidic residues. Positions 199 to 269 (SKKEEVKPEK…GTEKSDKYRE (71 aa)) are disordered. Positions 249 to 260 (RGGRSKFKKKKG) are enriched in basic residues. The tr-type G domain occupies 368–537 (GRAPVVTIMG…LLQSEVLELK (170 aa)). Residues 377–384 (GHVDHGKT) form a G1 region. Residue 377–384 (GHVDHGKT) participates in GTP binding. A G2 region spans residues 402–406 (GITQH). The interval 423-426 (DTPG) is G3. GTP contacts are provided by residues 423–427 (DTPGH) and 477–480 (NKMD). A G4 region spans residues 477 to 480 (NKMD). The interval 513–515 (SAK) is G5.

It belongs to the TRAFAC class translation factor GTPase superfamily. Classic translation factor GTPase family. IF-2 subfamily.

The protein localises to the cytoplasm. In terms of biological role, one of the essential components for the initiation of protein synthesis. Protects formylmethionyl-tRNA from spontaneous hydrolysis and promotes its binding to the 30S ribosomal subunits. Also involved in the hydrolysis of GTP during the formation of the 70S ribosomal complex. The sequence is that of Translation initiation factor IF-2 from Legionella pneumophila (strain Paris).